We begin with the raw amino-acid sequence, 175 residues long: Bifunctional protein PyrR (175 aa).

Substrate contacts are provided by residues 40 to 41 (TR), Arg85, 102 to 110 (DDVLYTGRT), Arg135, and Val159. The PRPP-binding signature appears at 98–110 (VVIIDDVLYTGRT).

This sequence belongs to the purine/pyrimidine phosphoribosyltransferase family. PyrR subfamily. Homodimer and homohexamer; in equilibrium.

It carries out the reaction UMP + diphosphate = 5-phospho-alpha-D-ribose 1-diphosphate + uracil. In terms of biological role, regulates transcriptional attenuation of the pyrimidine nucleotide (pyr) operon by binding in a uridine-dependent manner to specific sites on pyr mRNA. This disrupts an antiterminator hairpin in the RNA and favors formation of a downstream transcription terminator, leading to a reduced expression of downstream genes. Its function is as follows. Also displays a weak uracil phosphoribosyltransferase activity which is not physiologically significant. This chain is Bifunctional protein PyrR, found in Staphylococcus epidermidis (strain ATCC 35984 / DSM 28319 / BCRC 17069 / CCUG 31568 / BM 3577 / RP62A).